The following is a 128-amino-acid chain: uncharacterized protein (128 aa).

2 disordered regions span residues 62-83 (LNPSSHPPSPDFPTGSSASPRV) and 101-128 (FAASSSSTAPVTVTDKPVTPAVSKRYQP). Positions 101-114 (FAASSSSTAPVTVT) are enriched in low complexity.

Its subcellular location is the cytoplasm. The protein resides in the nucleus. This is an uncharacterized protein from Saccharomyces cerevisiae (strain ATCC 204508 / S288c) (Baker's yeast).